A 522-amino-acid polypeptide reads, in one-letter code: MDFLLLGLCLYWLLRRPSGVVLCLLGACFQMLPAAPSGCPQLCRCEGRLLYCEALNPTEAPHNLSGLLGLSLRYNSLSELRAGQFTGLMQLTWLYLDHNHICSVQGDAFQKLRRVKELTLSSNQITQLPNTTFRPMPNLRSVDLSYNKLQALAPDLFHGLRKLTTLHMRANAIQFVPVRIFQDCRSLKFLDIGYNQLKSLARNSFAGLFKLTELHLEHNDLVKVNFAHFPRLISLHSLCLRRNKVAIVVSSLDWVWNLKKMDLSGNEIEYMEPHVFETVPHLQSLQLDSNRLTYIEPRILNSWKSLTSITLAGNLWDCGRNVCALASWLSNFQGRYDGNLQCASPEYAQGEDVLDAVYAFHLCEDGAEPTSGHLLSAVTNRSDLGPPASSATTLADGGEGQHDGTFEPATVALPGGEHAENAVQIHKVVTGTMALIFSFLIVVLVLYVSWKCFPASLRQLRQCFVTQRRKQKQKQTMHQMAAMSAQEYYVDYKPNHIEGALVIINEYGSCTCHQQPARECEV.

Residues 1-34 (MDFLLLGLCLYWLLRRPSGVVLCLLGACFQMLPA) form the signal peptide. The LRRNT domain occupies 35–63 (APSGCPQLCRCEGRLLYCEALNPTEAPHN). The Extracellular segment spans residues 35 to 427 (APSGCPQLCR…HAENAVQIHK (393 aa)). N-linked (GlcNAc...) asparagine glycosylation is present at N63. LRR repeat units lie at residues 64 to 87 (LSGL…QFTG), 89 to 111 (MQLT…AFQK), 112 to 135 (LRRV…TFRP), 137 to 159 (PNLR…LFHG), 161 to 183 (RKLT…IFQD), 184 to 207 (CRSL…SFAG), 209 to 231 (FKLT…HFPR), 233 to 255 (ISLH…LDWV), 256 to 278 (WNLK…VFET), and 279 to 302 (VPHL…ILNS). N-linked (GlcNAc...) asparagine glycosylation occurs at N130. An LRRCT domain is found at 314–365 (NLWDCGRNVCALASWLSNFQGRYDGNLQCASPEYAQGEDVLDAVYAFHLCED). N-linked (GlcNAc...) asparagine glycosylation is present at N380. The interval 382–401 (SDLGPPASSATTLADGGEGQ) is disordered. The chain crosses the membrane as a helical span at residues 428 to 448 (VVTGTMALIFSFLIVVLVLYV). Topologically, residues 449–522 (SWKCFPASLR…HQQPARECEV (74 aa)) are cytoplasmic.

The protein belongs to the LRRTM family.

The protein resides in the cell membrane. Its subcellular location is the postsynaptic cell membrane. In terms of biological role, exhibits strong synaptogenic activity, restricted to excitatory presynaptic differentiation, acting at both pre- and postsynaptic level. This is Leucine-rich repeat transmembrane neuronal protein 1 (LRRTM1) from Pongo abelii (Sumatran orangutan).